A 359-amino-acid polypeptide reads, in one-letter code: 4-hydroxy-tetrahydrodipicolinate synthase, chloroplastic (359 aa).

A chloroplast-targeting transit peptide spans 1–33 (MSSSIIGRCHFVADSIEAAGTKRRTTRWRSPRA). A pyruvate-binding site is contributed by T102. The active-site Proton donor/acceptor is Y188. The active-site Schiff-base intermediate with substrate is K216. I255 lines the pyruvate pocket.

It belongs to the DapA family.

Its subcellular location is the plastid. It is found in the chloroplast. The catalysed reaction is L-aspartate 4-semialdehyde + pyruvate = (2S,4S)-4-hydroxy-2,3,4,5-tetrahydrodipicolinate + H2O + H(+). It functions in the pathway amino-acid biosynthesis; L-lysine biosynthesis via DAP pathway; (S)-tetrahydrodipicolinate from L-aspartate: step 3/4. Catalyzes the condensation of (S)-aspartate-beta-semialdehyde [(S)-ASA] and pyruvate to 4-hydroxy-tetrahydrodipicolinate (HTPA). The chain is 4-hydroxy-tetrahydrodipicolinate synthase, chloroplastic (DHPS1) from Nicotiana tabacum (Common tobacco).